We begin with the raw amino-acid sequence, 734 residues long: Photosystem I P700 chlorophyll a apoprotein A2 (734 aa).

8 consecutive transmembrane segments (helical) span residues 46–69, 135–158, 175–199, 273–291, 330–353, 369–395, 417–439, and 517–535; these read IFASHFGQLAIIFLWTSGNLFHVA, LYTGALFLLFLSAVSLIAGWLHLQ, LNHHLSGLFGVSSLAWTGHLVHVAI, IAHHHLAIALIFLVAGHMY, VHFQLGLALASLGVITSLVAQHMY, AALYTHHQYIAGFIMTGAFAHGAIFFI, AIISHLSWASLFLGFHTLGLYVH, and FLVHHAIALGLHTTTLILV. Positions 559 and 568 each coordinate [4Fe-4S] cluster. Helical transmembrane passes span 575–596 and 643–665; these read AFYLAVFWMLNTIGWVTFYWHW and LSVWAWMFLFGHLVWATGFMFLI. Positions 654, 662, and 670 each coordinate chlorophyll a. Trp671 contributes to the phylloquinone binding site. A helical transmembrane segment spans residues 707–727; that stretch reads LVGLAHFSVGYIFTYAAFLIA.

The protein belongs to the PsaA/PsaB family. The PsaA/B heterodimer binds the P700 chlorophyll special pair and subsequent electron acceptors. PSI consists of a core antenna complex that captures photons, and an electron transfer chain that converts photonic excitation into a charge separation. The eukaryotic PSI reaction center is composed of at least 11 subunits. P700 is a chlorophyll a/chlorophyll a' dimer, A0 is one or more chlorophyll a, A1 is one or both phylloquinones and FX is a shared 4Fe-4S iron-sulfur center. serves as cofactor.

Its subcellular location is the plastid. It localises to the chloroplast thylakoid membrane. It carries out the reaction reduced [plastocyanin] + hnu + oxidized [2Fe-2S]-[ferredoxin] = oxidized [plastocyanin] + reduced [2Fe-2S]-[ferredoxin]. Functionally, psaA and PsaB bind P700, the primary electron donor of photosystem I (PSI), as well as the electron acceptors A0, A1 and FX. PSI is a plastocyanin-ferredoxin oxidoreductase, converting photonic excitation into a charge separation, which transfers an electron from the donor P700 chlorophyll pair to the spectroscopically characterized acceptors A0, A1, FX, FA and FB in turn. Oxidized P700 is reduced on the lumenal side of the thylakoid membrane by plastocyanin. This chain is Photosystem I P700 chlorophyll a apoprotein A2, found in Platanus occidentalis (Sycamore).